The sequence spans 325 residues: Peroxidase 68 (325 aa).

The first 28 residues, 1–28, serve as a signal peptide directing secretion; that stretch reads MECYEQSRQRAAFVVLLFIVMLGSQAQA. At Q29 the chain carries Pyrrolidone carboxylic acid. 4 disulfides stabilise this stretch: C39–C119, C72–C77, C125–C321, and C205–C230. The active-site Proton acceptor is H70. Ca(2+) contacts are provided by D71, V74, G76, D78, and S80. N99 is a glycosylation site (N-linked (GlcNAc...) asparagine). P168 is a binding site for substrate. H198 serves as a coordination point for heme b. A Ca(2+)-binding site is contributed by T199. A glycan (N-linked (GlcNAc...) asparagine) is linked at N214. D245, T248, and D253 together coordinate Ca(2+).

This sequence belongs to the peroxidase family. Classical plant (class III) peroxidase subfamily. It depends on heme b as a cofactor. Ca(2+) is required as a cofactor.

It is found in the secreted. It carries out the reaction 2 a phenolic donor + H2O2 = 2 a phenolic radical donor + 2 H2O. Removal of H(2)O(2), oxidation of toxic reductants, biosynthesis and degradation of lignin, suberization, auxin catabolism, response to environmental stresses such as wounding, pathogen attack and oxidative stress. These functions might be dependent on each isozyme/isoform in each plant tissue. The sequence is that of Peroxidase 68 (PER68) from Arabidopsis thaliana (Mouse-ear cress).